The primary structure comprises 426 residues: Cell adhesion molecule CEACAM16 (426 aa).

Residues 1–22 (MKMPLTWYSWFLLSAWILNTGA) form the signal peptide. Asparagine 38 carries an N-linked (GlcNAc...) asparagine glycan. Residues 77 to 96 (ETPGPAHTGREAVRPDGSLD) are disordered. A compositionally biased stretch (basic and acidic residues) spans 84–95 (TGREAVRPDGSL). Ig-like C2-type domains lie at 134–219 (PPTV…LNLT) and 224–310 (PERV…ASVV). A disulfide bridge links cysteine 155 with cysteine 202. An N-linked (GlcNAc...) asparagine glycan is attached at asparagine 217. A disulfide bridge links cysteine 253 with cysteine 294.

Belongs to the immunoglobulin superfamily. CEA family. In terms of assembly, homooligomer; can for homodimers and homotetramers. Interacts with TECTA and TECTB. In terms of tissue distribution, expressed in cochlear outer hair cells (OHC).

It localises to the secreted. In terms of biological role, required for proper hearing, plays a role in maintaining the integrity of the tectorial membrane. In Mus musculus (Mouse), this protein is Cell adhesion molecule CEACAM16.